A 450-amino-acid chain; its full sequence is UDP-N-acetylmuramoylalanine--D-glutamate ligase (450 aa).

119-125 provides a ligand contact to ATP; sequence GSNGKTT.

It belongs to the MurCDEF family.

Its subcellular location is the cytoplasm. It carries out the reaction UDP-N-acetyl-alpha-D-muramoyl-L-alanine + D-glutamate + ATP = UDP-N-acetyl-alpha-D-muramoyl-L-alanyl-D-glutamate + ADP + phosphate + H(+). It functions in the pathway cell wall biogenesis; peptidoglycan biosynthesis. Its function is as follows. Cell wall formation. Catalyzes the addition of glutamate to the nucleotide precursor UDP-N-acetylmuramoyl-L-alanine (UMA). The chain is UDP-N-acetylmuramoylalanine--D-glutamate ligase from Streptococcus pneumoniae (strain ATCC BAA-255 / R6).